Consider the following 148-residue polypeptide: Snaclec 4 (148 aa).

Residues 1 to 23 (MGRFIFVSFSLLVVFFSLSGTEA) form the signal peptide. A C-type lectin domain is found at 34–148 (YDQNCYKAFE…DTQFRLQEPG (115 aa)).

It belongs to the snaclec family. As to quaternary structure, heterodimer; disulfide-linked. In terms of processing, contains disulfide bonds. Expressed by the venom gland.

It is found in the secreted. In terms of biological role, interferes with one step of hemostasis (modulation of platelet aggregation, or coagulation cascade, for example). In Echis pyramidum leakeyi (Leakey's carpet viper), this protein is Snaclec 4.